The primary structure comprises 496 residues: Acetyl-coenzyme A carboxylase carboxyl transferase subunit beta, chloroplastic (496 aa).

The CoA carboxyltransferase N-terminal domain maps to 229–496 (LWVQCENCYG…FFPLNKNFIK (268 aa)). Positions 233, 236, 252, and 255 each coordinate Zn(2+). The C4-type zinc-finger motif lies at 233 to 255 (CENCYGLNYKKFFRLKLHICEQC).

The protein belongs to the AccD/PCCB family. Acetyl-CoA carboxylase is a heterohexamer composed of biotin carboxyl carrier protein, biotin carboxylase and 2 subunits each of ACCase subunit alpha and ACCase plastid-coded subunit beta (accD). It depends on Zn(2+) as a cofactor.

It localises to the plastid. Its subcellular location is the chloroplast stroma. It catalyses the reaction N(6)-carboxybiotinyl-L-lysyl-[protein] + acetyl-CoA = N(6)-biotinyl-L-lysyl-[protein] + malonyl-CoA. It functions in the pathway lipid metabolism; malonyl-CoA biosynthesis; malonyl-CoA from acetyl-CoA: step 1/1. Its function is as follows. Component of the acetyl coenzyme A carboxylase (ACC) complex. Biotin carboxylase (BC) catalyzes the carboxylation of biotin on its carrier protein (BCCP) and then the CO(2) group is transferred by the transcarboxylase to acetyl-CoA to form malonyl-CoA. The sequence is that of Acetyl-coenzyme A carboxylase carboxyl transferase subunit beta, chloroplastic from Ranunculus macranthus (Large buttercup).